A 1193-amino-acid chain; its full sequence is K(+) efflux antiporter 1, chloroplastic (1193 aa).

The transit peptide at 1-49 (MEYASTFQRPILFHGGDGASYCFPNRLISPKGISITSGDSKVHSCFRLR) directs the protein to the chloroplast. Topologically, residues 50-585 (RNVAQSGTLN…MIPHQEVNEE (536 aa)) are stromal. Residues 103–135 (SLGNADSNDHRIGESSESSDETEATDLKDARVE) are disordered. A coiled-coil region spans residues 131-355 (DARVENDTDS…RAEKSLSISQ (225 aa)). Position 168 is an N6-acetyllysine; by NSI (Lys-168). Residues 351-364 (LSISQTPEETQGQL) are compositionally biased toward polar residues. Disordered regions lie at residues 351-372 (LSIS…TSQE) and 421-474 (QPYE…NSPK). Residues 439–465 (KVVEADSEKPKINVQTKKQETQKDLPK) are compositionally biased toward basic and acidic residues. The chain crosses the membrane as a helical span at residues 586 to 606 (EASLFDFLWLLLASVIFVPLF). Residues 607-612 (QKIPGG) lie on the Chloroplast intermembrane side of the membrane. Residues 613 to 633 (SPVLGYLAAGILIGPYGLSII) form a helical membrane-spanning segment. Residues 634 to 640 (RNVHGTR) lie on the Stromal side of the membrane. A helical membrane pass occupies residues 641 to 661 (AIAEFGVVFLLFNIGLELSVE). The Chloroplast intermembrane segment spans residues 662-668 (RLSSMKK). Residues 669–689 (YVFGLGSAQVLVTAAVVGLLA) traverse the membrane as a helical segment. Residues 690–698 (HYVAGQAGP) are Stromal-facing. A helical membrane pass occupies residues 699–719 (AAIVIGNGLALSSTAVVLQVL). The Chloroplast intermembrane portion of the chain corresponds to 720-733 (QERGESTSRHGRAS). Residues 734-754 (FSVLLFQDLAVVVLLILIPLI) traverse the membrane as a helical segment. At 755–766 (SPNSSKGGIGFQ) the chain is on the stromal side. A helical transmembrane segment spans residues 767 to 787 (AIAEALGLAAVKAAVAITAII). Residues 788-827 (AGGRLLLRPIYKQIAENRNAEIFSANTLLVILGTSLLTAR) lie on the Chloroplast intermembrane side of the membrane. Residues 828–848 (AGLSMALGAFLAGLLLAETEF) traverse the membrane as a helical segment. The Stromal portion of the chain corresponds to 849–860 (SLQVESDIAPYR). Residues 861-881 (GLLLGLFFMTVGMSIDPKLLL) form a helical membrane-spanning segment. Over 882–883 (SN) the chain is Chloroplast intermembrane. The helical transmembrane segment at 884–904 (FPVIVGTLGLLIVGKTMLVVI) threads the bilayer. Topologically, residues 905 to 912 (MGKLFGIS) are stromal. The helical transmembrane segment at 913 to 933 (IISAIRVGLLLAPGGEFAFVA) threads the bilayer. The Chloroplast intermembrane segment spans residues 934-948 (FGEAVNQGIMSPQLS). Residues 949-969 (SLLFLVVGISMAITPWLAAGG) traverse the membrane as a helical segment. Residues 970–1193 (QLIASRFELH…QIIEGGTVVI (224 aa)) are Stromal-facing. Residues 995-1112 (QGHIIICGFG…EKAGATAVVP (118 aa)) form the RCK N-terminal domain. Residues 1165 to 1184 (GYSRTSKPKPQPSDASGDNQ) are disordered.

It belongs to the monovalent cation:proton antiporter 2 (CPA2) transporter (TC 2.A.37) family. KEA (TC 2.A.37.1) subfamily. In terms of processing, acetylated at Lys-168 by the stromal acetyltransferase enzyme NSI. Expressed in shoots and roots. Mainly localized to leaf veins, hypocotyls, mesophylls and guard cells. Accumulates at high levels in small and dividing plastids (at protein level).

The protein localises to the plastid. It localises to the chloroplast inner membrane. It catalyses the reaction K(+)(in) + H(+)(out) = K(+)(out) + H(+)(in). Its activity is regulated as follows. Repressed by sodium ions Na(+). In terms of biological role, electroneutral K(+)/H(+) efflux antiporter involved in chloroplastic K(+) homeostasis and osmotic adjustment, especially during plastid division and thylakoid membrane formation. Collaboratively with KEA2, adjusts alkaline stromal pH upon light to dark transitions in plastids. Together with KEA2, critical for chloroplast development, including chloroplast RNA-metabolism (e.g. rRNA maturation, polysome loading and RNA-protein interactions) and plastid gene expression (PGE), ion homeostasis, and photosynthesis. Contributes, during early seedling development, to the regulation of photosynthesis and abscisic acid- (ABA-) mediated primary root growth in a sucrose-dependent manner. Involved in the regulation of reactive oxygen and nitrogen species (ROS and RNS) metabolism. Required in roots for rapid hyperosmotic-induced Ca(2+) responses and for osmo-sensory potentiation in hyperosmotic conditions. May counteract resilience to drought and salt stress, involving photorespiratory pathway and stomata closure. This Arabidopsis thaliana (Mouse-ear cress) protein is K(+) efflux antiporter 1, chloroplastic.